The chain runs to 368 residues: MTTLHSTPRADGFHMPAEWAPQTQTWMIWPERPDNWRLGGKPAQAAHVAVAKAIARFEPVTVAVSAGQYENARARLDVPNIRVVEMSSDDAWVRDTGPTFVINRSGEVRGVNWDFNAWGGFDGGLYSPWNRDSQIGGKILEIERAPRYCTEGFVLEGGSIHVDGEGTLITTEECLLNSNRNPHLDRAQIEAVLSANLAVDKIIWLPDGLFNDETDGHVDNFCCYVRPGEVLLAWTDDPQDPNYARCHAAMNVLQSSTDAQGRSFTVHKMPIPGPLYATEAECAGVDPVDGTQERNPTVRLAGSYVNFLIVNGGIIAPSFDDPLDSQAKAILQDLFPQHEVVMVPGRELLLGGGNIHCLTQQQPAPHKN.

The active-site Amidino-cysteine intermediate is Cys-357.

Belongs to the agmatine deiminase family. As to quaternary structure, homodimer.

The catalysed reaction is agmatine + H2O = N-carbamoylputrescine + NH4(+). It functions in the pathway amine and polyamine biosynthesis; putrescine biosynthesis via agmatine pathway; N-carbamoylputrescine from agmatine: step 1/1. Its function is as follows. Mediates the hydrolysis of agmatine into N-carbamoylputrescine in the arginine decarboxylase (ADC) pathway of putrescine biosynthesis, a basic polyamine. The sequence is that of Agmatine deiminase from Pseudomonas fluorescens (strain SBW25).